The chain runs to 729 residues: Beta-galactosidase 4 (729 aa).

Residues methionine 1–asparagine 35 form the signal peptide. The active-site Proton donor is glutamate 194. Catalysis depends on glutamate 263, which acts as the Nucleophile.

The protein belongs to the glycosyl hydrolase 35 family.

The protein localises to the secreted. The protein resides in the extracellular space. Its subcellular location is the apoplast. It catalyses the reaction Hydrolysis of terminal non-reducing beta-D-galactose residues in beta-D-galactosides.. The polypeptide is Beta-galactosidase 4 (Oryza sativa subsp. japonica (Rice)).